A 294-amino-acid chain; its full sequence is Bifunctional protein FolD (294 aa).

NADP(+)-binding positions include 164–166, serine 193, and isoleucine 234; that span reads GRS.

Belongs to the tetrahydrofolate dehydrogenase/cyclohydrolase family. Homodimer.

The catalysed reaction is (6R)-5,10-methylene-5,6,7,8-tetrahydrofolate + NADP(+) = (6R)-5,10-methenyltetrahydrofolate + NADPH. It carries out the reaction (6R)-5,10-methenyltetrahydrofolate + H2O = (6R)-10-formyltetrahydrofolate + H(+). Its pathway is one-carbon metabolism; tetrahydrofolate interconversion. In terms of biological role, catalyzes the oxidation of 5,10-methylenetetrahydrofolate to 5,10-methenyltetrahydrofolate and then the hydrolysis of 5,10-methenyltetrahydrofolate to 10-formyltetrahydrofolate. The polypeptide is Bifunctional protein FolD (Flavobacterium psychrophilum (strain ATCC 49511 / DSM 21280 / CIP 103535 / JIP02/86)).